A 379-amino-acid chain; its full sequence is D-threonine aldolase (379 aa).

K59 bears the N6-(pyridoxal phosphate)lysine mark.

Belongs to the DSD1 family. It depends on pyridoxal 5'-phosphate as a cofactor. The cofactor is Mn(2+). Co(2+) serves as cofactor. Ni(2+) is required as a cofactor. Requires Mg(2+) as cofactor.

The catalysed reaction is D-threonine = acetaldehyde + glycine. It carries out the reaction D-allo-threonine = acetaldehyde + glycine. With respect to regulation, inhibited by the carbonyl reagents hydroxylamine, phenylhydrazine and semicarbazide. Inhibited by the chelating agent EDTA. Inhibited by the sulfhydryl reagent p-chloromercuribenzoic acid, and by sodium cyanide. Inhibited by iodoacetate, Ag(2)SO(4), HgCl(2) and CdCl(2). Competitively inhibited by beta-hydroxyaspartate and O-phospho-DL-threonine. In terms of biological role, catalyzes the reversible cleavage of D-threonine or D-allothreonine into glycine and acetaldehyde. Can also cleave D-beta-phenylserine, D-beta-hydroxy-alpha-aminovaleric acid, D-beta-3,4-dihydroxyphenylserine and D-beta-3,4-methylenedioxyphenylserine into glycine and the corresponding aldehyde compounds. Inactive towards D-serine, beta-hydroxyaspartate and O-phospho-DL-threonine. The polypeptide is D-threonine aldolase (Arthrobacter sp).